The following is a 655-amino-acid chain: Ubiquilin-3 (655 aa).

The region spanning 22–98 (IKVTVKTPKD…LVIKRQHRAM (77 aa)) is the Ubiquitin-like domain. Residues 102–124 (CPAASVPTQGPSPGSLPQPSSIY) are disordered. The span at 110 to 122 (QGPSPGSLPQPSS) shows a compositional bias: low complexity. An STI1 domain is found at 194–233 (NPHMQQLIQHNPEIGHILNNPEIMRQTLEFLRNPAMMQEM). Disordered regions lie at residues 277–330 (PFAT…PDIR), 364–399 (ASALSQSQEPPPSVNRVPPSSPSSQEPGSGQPLPEE), and 412–447 (FLRYPTENSTGQGGDQDGAGKSSTGHSTNLPDLVSG). A compositionally biased stretch (low complexity) spans 279-290 (ATATTDNATTTT). Residues 318-330 (GRQDGDQDAPDIR) show a composition bias toward basic and acidic residues. Residues 377 to 395 (VNRVPPSSPSSQEPGSGQP) are compositionally biased toward low complexity. A compositionally biased stretch (polar residues) spans 432-441 (KSSTGHSTNL). One can recognise a UBA domain in the interval 609-655 (QLQPEAHFQVQLEQLRSMGFLNREANLQALIATGGDVDAAVEKLRQS).

Testis specific.

This is Ubiquilin-3 (UBQLN3) from Homo sapiens (Human).